The following is a 344-amino-acid chain: uncharacterized protein (344 aa).

6 helical membrane-spanning segments follow: residues 155–175 (IARITLAPLGMIFLVYSIFLV), 181–201 (WGLGGIIFFLGVYFMVKAYGW), 221–241 (LSFIFYVTSAILLIISIVNGF), 254–274 (ISSFIFYSTWWFVLSGIFALL), 291–311 (FTIIFLLIAFGLIVWASAAYV), and 319–339 (ALQNLAGAIVGAILIAAIGVF).

The protein to M.jannaschii MJ1032.

The protein resides in the cell membrane. This is an uncharacterized protein from Archaeoglobus fulgidus (strain ATCC 49558 / DSM 4304 / JCM 9628 / NBRC 100126 / VC-16).